We begin with the raw amino-acid sequence, 1598 residues long: Mushroom body large-type Kenyon cell-specific protein 1 (1598 aa).

Disordered stretches follow at residues 83-105 (PGNL…SLPA), 140-387 (RHHH…SDGI), 436-462 (PHDD…PMSV), and 495-525 (PLVG…SQDN). Basic residues predominate over residues 140 to 151 (RHHHLQNHHHHL). Over residues 164-174 (QQQQQQQQRQQ) the composition is skewed to low complexity. Residues 175 to 191 (QRQEERRLRPDEIKVEV) are compositionally biased toward basic and acidic residues. The span at 210-263 (STDASTPATVTTTGATTTLPAASATGTGPATPSAVVATSNATAAMTTGTTTIPT) shows a compositional bias: low complexity. The segment covering 275 to 291 (EGADDRDDDEENEEEED) has biased composition (acidic residues). 3 stretches are compositionally biased toward basic and acidic residues: residues 292–305 (GRGQ…LKLD), 315–324 (LRREKDRGSR), and 335–346 (DGTKERTEEVAL). Ser444 is modified (phosphoserine; by MAPK). Low complexity predominate over residues 445 to 461 (PQSDSSSSSRSAESPMS). The 53-residue stretch at 582 to 634 (VGAGGGRRAYTEEELQAALRDIQSGKLGTRRAAVIYGIPRSTLRNKVYKLAME) folds into the HTH psq-type 1 domain. Positions 610–630 (TRRAAVIYGIPRSTLRNKVYK) form a DNA-binding region, H-T-H motif. Disordered stretches follow at residues 636 to 705 (ERDA…SGAE), 797 to 877 (RLSK…DSAQ), 962 to 1045 (GQTV…NYDR), 1082 to 1145 (ERHL…NGIK), 1248 to 1283 (ETSA…NGSF), and 1301 to 1598 (RAMT…SVEQ). Residues 653-687 (APATTITTITTTTTTTTTTTTTTTTPNTTQNASAT) are compositionally biased toward low complexity. The segment covering 694–705 (DEVDDKELSGAE) has biased composition (acidic residues). The segment covering 820-855 (THPQAQAQAQPQQQQQQQQQQPQQQQQQQQQQQQQQ) has biased composition (low complexity). Over residues 965-975 (VSGGGMGGCQP) the composition is skewed to gly residues. Residues 1003-1021 (ANAQQGQAQAQAKPQSQEA) show a composition bias toward low complexity. Positions 1034 to 1086 (RPKRGKYRNYDRDSLVEAVRAVQRGEMSVHRAGSYYGVPHSTLEYKVKERHLM) constitute an HTH psq-type 2 domain. The segment at residues 1062 to 1082 (VHRAGSYYGVPHSTLEYKVKE) is a DNA-binding region (H-T-H motif). A compositionally biased stretch (basic and acidic residues) spans 1093–1102 (QKQSDDKTKE). Positions 1103-1120 (TSTVTAAAAATNIRPGTA) are enriched in low complexity. Low complexity predominate over residues 1309 to 1318 (QQQQASSQQQ). Composition is skewed to basic and acidic residues over residues 1383 to 1392 (DRGRNDDGSD) and 1407 to 1442 (GSRD…DRKT). The span at 1447 to 1466 (PQQPQQQQQQQQQQQQQQQQ) shows a compositional bias: low complexity. The segment covering 1481–1497 (TDKKSACDSKLIVDHSS) has biased composition (basic and acidic residues). The segment covering 1501–1547 (QQQQPQQQQQQQQQQQPQQQSQQPQQQQPQPQQQQQQQQQQQPQQQQ) has biased composition (low complexity). Residues 1562–1577 (RGYNSGNNRSGEQANS) are compositionally biased toward polar residues.

In terms of assembly, homodimer. As to expression, large-type Kenyon cells of mushroom body.

It localises to the nucleus. Functionally, transcriptional activator which binds to the consensus sequence 5'-CCCTATCGATCGATCTCTACCT-3'. May play a role in higher-order sensory processing. The protein is Mushroom body large-type Kenyon cell-specific protein 1 (Mblk-1) of Apis mellifera (Honeybee).